A 173-amino-acid chain; its full sequence is ATP-dependent protease subunit HslV (173 aa).

Residue Thr-2 is part of the active site. Positions 158, 161, and 164 each coordinate Na(+).

Belongs to the peptidase T1B family. HslV subfamily. A double ring-shaped homohexamer of HslV is capped on each side by a ring-shaped HslU homohexamer. The assembly of the HslU/HslV complex is dependent on binding of ATP.

Its subcellular location is the cytoplasm. The enzyme catalyses ATP-dependent cleavage of peptide bonds with broad specificity.. Its activity is regulated as follows. Allosterically activated by HslU binding. Functionally, protease subunit of a proteasome-like degradation complex believed to be a general protein degrading machinery. The sequence is that of ATP-dependent protease subunit HslV from Mannheimia succiniciproducens (strain KCTC 0769BP / MBEL55E).